The chain runs to 284 residues: Diaminopimelate epimerase (284 aa).

Residues asparagine 20, glutamine 53, and asparagine 73 each contribute to the substrate site. Cysteine 82 acts as the Proton donor in catalysis. Substrate-binding positions include 83–84, asparagine 167, asparagine 200, and 218–219; these read GN and ER. Catalysis depends on cysteine 227, which acts as the Proton acceptor. 228 to 229 contacts substrate; the sequence is GS.

This sequence belongs to the diaminopimelate epimerase family. As to quaternary structure, homodimer.

It localises to the cytoplasm. It carries out the reaction (2S,6S)-2,6-diaminopimelate = meso-2,6-diaminopimelate. The protein operates within amino-acid biosynthesis; L-lysine biosynthesis via DAP pathway; DL-2,6-diaminopimelate from LL-2,6-diaminopimelate: step 1/1. Functionally, catalyzes the stereoinversion of LL-2,6-diaminopimelate (L,L-DAP) to meso-diaminopimelate (meso-DAP), a precursor of L-lysine and an essential component of the bacterial peptidoglycan. The sequence is that of Diaminopimelate epimerase from Xylella fastidiosa (strain M23).